A 476-amino-acid chain; its full sequence is ATP synthase subunit beta 2 (476 aa).

Residue 160-167 (GGAGVGKT) coordinates ATP.

It belongs to the ATPase alpha/beta chains family. F-type ATPases have 2 components, CF(1) - the catalytic core - and CF(0) - the membrane proton channel. CF(1) has five subunits: alpha(3), beta(3), gamma(1), delta(1), epsilon(1). CF(0) has four main subunits: a(1), b(1), b'(1) and c(9-12).

The protein resides in the cell inner membrane. The catalysed reaction is ATP + H2O + 4 H(+)(in) = ADP + phosphate + 5 H(+)(out). Produces ATP from ADP in the presence of a proton gradient across the membrane. The catalytic sites are hosted primarily by the beta subunits. This is ATP synthase subunit beta 2 from Bradyrhizobium sp. (strain BTAi1 / ATCC BAA-1182).